A 172-amino-acid chain; its full sequence is NADH-ubiquinone oxidoreductase chain 6 (172 aa).

5 helical membrane-spanning segments follow: residues 1-21, 24-44, 53-73, 86-106, and 140-160; these read MAFY…AIAS, APYF…GILV, LILF…SAAL, VVFW…GFLL, and GKML…VLEV.

It belongs to the complex I subunit 6 family. In terms of assembly, core subunit of respiratory chain NADH dehydrogenase (Complex I) which is composed of 45 different subunits.

The protein resides in the mitochondrion inner membrane. It catalyses the reaction a ubiquinone + NADH + 5 H(+)(in) = a ubiquinol + NAD(+) + 4 H(+)(out). Core subunit of the mitochondrial membrane respiratory chain NADH dehydrogenase (Complex I) which catalyzes electron transfer from NADH through the respiratory chain, using ubiquinone as an electron acceptor. Essential for the catalytic activity and assembly of complex I. The chain is NADH-ubiquinone oxidoreductase chain 6 (mt-nd6) from Danio rerio (Zebrafish).